Here is a 382-residue protein sequence, read N- to C-terminus: Na(+)/H(+) antiporter NhaA (382 aa).

A run of 11 helical transmembrane segments spans residues 13–33 (IGGI…NSPF), 58–78 (LLLW…GLEI), 94–114 (LVPA…FIFF), 124–144 (GWAI…SLLG), 153–173 (ILLT…IALF), 179–199 (SLLS…LNYF), 204–224 (ISVF…SGVH), 256–276 (VVFL…FVGL), 285–305 (VVLG…FLSL), 325–345 (VYGI…IGSL), and 357–377 (MVKI…FLVL).

This sequence belongs to the NhaA Na(+)/H(+) (TC 2.A.33) antiporter family.

The protein localises to the cell inner membrane. It catalyses the reaction Na(+)(in) + 2 H(+)(out) = Na(+)(out) + 2 H(+)(in). Its function is as follows. Na(+)/H(+) antiporter that extrudes sodium in exchange for external protons. This chain is Na(+)/H(+) antiporter NhaA, found in Legionella pneumophila (strain Paris).